Reading from the N-terminus, the 23-residue chain is Brevinin-1SE (23 aa).

A disulfide bond links Cys17 and Cys23.

As to expression, expressed by the skin glands.

The protein resides in the secreted. Its function is as follows. Mast cell degranulating peptide. Causes histamine release from rat peritoneal mast cells in vitro. Has antibacterial activity against the Gram-negative bacterium E.coli K12 and Gram-positive bacterium M.luteus NCT C2665. In Lithobates sevosus (Dusky gopher frog), this protein is Brevinin-1SE.